Consider the following 100-residue polypeptide: Large ribosomal subunit protein uL23 (100 aa).

It belongs to the universal ribosomal protein uL23 family. In terms of assembly, part of the 50S ribosomal subunit. Contacts protein L29, and trigger factor when it is bound to the ribosome.

Functionally, one of the early assembly proteins it binds 23S rRNA. One of the proteins that surrounds the polypeptide exit tunnel on the outside of the ribosome. Forms the main docking site for trigger factor binding to the ribosome. The sequence is that of Large ribosomal subunit protein uL23 from Pseudoalteromonas translucida (strain TAC 125).